Consider the following 644-residue polypeptide: Exoribonuclease 2 (644 aa).

Residues 189-516 (RRDLTALDFV…NHRLLKAIIK (328 aa)) enclose the RNB domain. Residues 561 to 643 (DTRFAAEIID…ETRSIIARPA (83 aa)) form the S1 motif domain.

It belongs to the RNR ribonuclease family. RNase II subfamily.

The protein localises to the cytoplasm. It catalyses the reaction Exonucleolytic cleavage in the 3'- to 5'-direction to yield nucleoside 5'-phosphates.. Functionally, involved in mRNA degradation. Hydrolyzes single-stranded polyribonucleotides processively in the 3' to 5' direction. The polypeptide is Exoribonuclease 2 (Klebsiella pneumoniae subsp. pneumoniae (strain ATCC 700721 / MGH 78578)).